Reading from the N-terminus, the 322-residue chain is HPr kinase/phosphorylase (322 aa).

Active-site residues include histidine 143 and lysine 164. 158 to 165 (GRSGVGKS) contributes to the ATP binding site. Serine 165 provides a ligand contact to Mg(2+). The active-site Proton acceptor; for phosphorylation activity. Proton donor; for dephosphorylation activity is aspartate 182. The interval 206–215 (MEIRGLGILN) is important for the catalytic mechanism of both phosphorylation and dephosphorylation. Glutamate 207 serves as a coordination point for Mg(2+). Residue arginine 250 is part of the active site. Residues 271 to 276 (PVKPGR) form an important for the catalytic mechanism of dephosphorylation region.

This sequence belongs to the HPrK/P family. In terms of assembly, homohexamer. The cofactor is Mg(2+).

The enzyme catalyses [HPr protein]-L-serine + ATP = [HPr protein]-O-phospho-L-serine + ADP + H(+). The catalysed reaction is [HPr protein]-O-phospho-L-serine + phosphate + H(+) = [HPr protein]-L-serine + diphosphate. Functionally, catalyzes the ATP- as well as the pyrophosphate-dependent phosphorylation of a specific serine residue in HPr, a phosphocarrier protein of the phosphoenolpyruvate-dependent sugar phosphotransferase system (PTS). HprK/P also catalyzes the pyrophosphate-producing, inorganic phosphate-dependent dephosphorylation (phosphorolysis) of seryl-phosphorylated HPr (P-Ser-HPr). In Leptospira biflexa serovar Patoc (strain Patoc 1 / Ames), this protein is HPr kinase/phosphorylase.